A 475-amino-acid polypeptide reads, in one-letter code: Glycogen synthase (475 aa).

Lysine 15 contacts ADP-alpha-D-glucose.

Belongs to the glycosyltransferase 1 family. Bacterial/plant glycogen synthase subfamily.

The enzyme catalyses [(1-&gt;4)-alpha-D-glucosyl](n) + ADP-alpha-D-glucose = [(1-&gt;4)-alpha-D-glucosyl](n+1) + ADP + H(+). The protein operates within glycan biosynthesis; glycogen biosynthesis. Functionally, synthesizes alpha-1,4-glucan chains using ADP-glucose. This Chlamydia caviae (strain ATCC VR-813 / DSM 19441 / 03DC25 / GPIC) (Chlamydophila caviae) protein is Glycogen synthase.